A 187-amino-acid chain; its full sequence is MKNSELLKIIWALKNGEIIAYPAESVFSLGCDPDNDKTIQKLLTLKNRSWEKGFILVSDNYDKLTKYIDDKKLTKFQKRIISFHDTFFPRTWVVPAKKCVSKLITGQFKSIAIRISRFEYIKNICLNYGKPIISTSANISNDAPCRTKNEVAKKFNQCVRTMNGKTLGNFQHSIVQDLLNGYLYRKR.

The 185-residue stretch at 3–187 folds into the YrdC-like domain; the sequence is NSELLKIIWA…LLNGYLYRKR (185 aa).

It belongs to the SUA5 family. TsaC subfamily.

Its subcellular location is the cytoplasm. The catalysed reaction is L-threonine + hydrogencarbonate + ATP = L-threonylcarbamoyladenylate + diphosphate + H2O. In terms of biological role, required for the formation of a threonylcarbamoyl group on adenosine at position 37 (t(6)A37) in tRNAs that read codons beginning with adenine. Catalyzes the conversion of L-threonine, HCO(3)(-)/CO(2) and ATP to give threonylcarbamoyl-AMP (TC-AMP) as the acyladenylate intermediate, with the release of diphosphate. This is Threonylcarbamoyl-AMP synthase from Riesia pediculicola (strain USDA).